We begin with the raw amino-acid sequence, 142 residues long: Hemoglobin subunit alpha (142 aa).

The region spanning 2–142 is the Globin domain; the sequence is VLSAADKNNV…VSTVLTSKYR (141 aa). The residue at position 4 (Ser-4) is a Phosphoserine. 2 positions are modified to N6-succinyllysine: Lys-8 and Lys-12. Lys-17 is modified (N6-acetyllysine; alternate). Position 17 is an N6-succinyllysine; alternate (Lys-17). A Phosphotyrosine modification is found at Tyr-25. Phosphoserine is present on Ser-36. The residue at position 41 (Lys-41) is an N6-succinyllysine. Phosphoserine is present on Ser-50. His-59 provides a ligand contact to O2. A heme b-binding site is contributed by His-88. At Thr-109 the chain carries Phosphothreonine. Phosphoserine occurs at positions 125 and 132. Thr-135 and Thr-138 each carry phosphothreonine. Residue Ser-139 is modified to Phosphoserine.

It belongs to the globin family. As to quaternary structure, heterotetramer of two alpha chains and two beta chains. As to expression, red blood cells.

Involved in oxygen transport from the lung to the various peripheral tissues. Functionally, hemopressin acts as an antagonist peptide of the cannabinoid receptor CNR1. Hemopressin-binding efficiently blocks cannabinoid receptor CNR1 and subsequent signaling. The polypeptide is Hemoglobin subunit alpha (HBA) (Cavia porcellus (Guinea pig)).